A 1694-amino-acid chain; its full sequence is Homeobox-DDT domain protein RLT2 (1694 aa).

The segment at 1 to 24 is disordered; sequence MEGGSEKTTPEGCGGESKSKRKMK. The segment at residues 17 to 76 is a DNA-binding region (homeobox); sequence SKSKRKMKTAAQLEVLENTYSAEPYPSEAIRADLSVKLNLSDRQLQMWFCHRRLKERKST. A DDT domain is found at 514-573; sequence DENVANLLMVWRFLITFADVLGLWPFTLDEFAQAFHDYDPRLMGEIHIVLLKTIIKDIEG. The HTH HARE-type domain maps to 696–765; the sequence is GTVKFAAFHV…APSTYCVRAS (70 aa). Residues 795 to 816 show a composition bias toward acidic residues; it reads EDVDDAERDEDSESDVGEDPEV. Disordered stretches follow at residues 795–822, 1450–1541, 1555–1639, and 1655–1674; these read EDVD…NLKK, KQEE…ICNE, AKTS…MNMK, and EDSY…AATR. 2 positions are modified to phosphoserine: S806 and S808. A compositionally biased stretch (gly residues) spans 1459-1470; the sequence is GLGGVSSSGRGG. Composition is skewed to basic residues over residues 1471-1485 and 1515-1531; these read RPPR…RGNG and GGRK…RKRP. 3 stretches are compositionally biased toward acidic residues: residues 1561 to 1578, 1589 to 1605, and 1624 to 1635; these read DNDD…DDGE, EDYD…DFDG, and DEYEEEEEEEED.

As to quaternary structure, interacts with CHR11. Interacts (via the DDT domain) with CHR11 (via C-terminus). Highly expressed in growing tissues such as inflorescence and flower meristems, young leaves and floral organs. Expressed in roots, rosette and cauline leaves, stems, flowers, inflorescences and siliques.

It localises to the nucleus. Functionally, transcriptional regulator required for the maintenance of the plant vegetative phase. In association with CHR11 or CHR17 may prevent the early activation of the vegetative-to-reproductive transition by regulating key genes that contribute to flower timing, such as FT, SEP1, SEP3, AGL8/FUL, SOC1 and FLC. Involved in the transcriptional regulation of seed-specific gene expression. The chain is Homeobox-DDT domain protein RLT2 from Arabidopsis thaliana (Mouse-ear cress).